The chain runs to 29 residues: Dermaseptin-H7 (29 aa).

Leu29 is subject to Leucine amide.

It belongs to the frog skin active peptide (FSAP) family. Dermaseptin subfamily. As to expression, expressed by the skin glands.

It localises to the secreted. Functionally, has antibacterial activity against the Gram-negative bacterium E.coli and the Gram-positive bacterium S.aureus. Has antiprotozoal activity against L.amazonensis. Has antifungal activity. Has no hemolytic activity. The sequence is that of Dermaseptin-H7 from Pithecopus hypochondrialis (Orange-legged leaf frog).